The primary structure comprises 526 residues: Triacylglycerol lipase OBL1 (526 aa).

The chain crosses the membrane as a helical span at residues 79-99 (GHLTDFLLNFYYQNHGFLGIL). The GXSXG signature appears at 338 to 342 (GHSLG). Residue Ser-340 is the Nucleophile of the active site. Catalysis depends on charge relay system residues Asp-404 and His-497.

The protein belongs to the AB hydrolase superfamily. Lipase family.

Its subcellular location is the membrane. The enzyme catalyses a triacylglycerol + H2O = a diacylglycerol + a fatty acid + H(+). Functionally, acid lipase that can hydrolyze a range of triacylglycerols but is not active on phospholipids. In vitro, hydrolyzes triolein, trilinolein, triricinolein, tripalmitin, trilaurin and tricaprin. May play a role in the regulation of lipolysis in germinating seeds. The chain is Triacylglycerol lipase OBL1 from Ricinus communis (Castor bean).